Reading from the N-terminus, the 304-residue chain is D-alanine--D-alanine ligase (304 aa).

The ATP-grasp domain maps to 107 to 300 (KRLWQGSGLP…FDELVARILG (194 aa)). An ATP-binding site is contributed by 134–186 (VGYPVIVKPAREGSSLGMSRVEGPEELAEAYRVAAAYDDTVLAEAWVEGEEYT). The Mg(2+) site is built by Asp254, Glu267, and Asn269.

It belongs to the D-alanine--D-alanine ligase family. Requires Mg(2+) as cofactor. It depends on Mn(2+) as a cofactor.

The protein localises to the cytoplasm. The enzyme catalyses 2 D-alanine + ATP = D-alanyl-D-alanine + ADP + phosphate + H(+). It functions in the pathway cell wall biogenesis; peptidoglycan biosynthesis. Cell wall formation. This Halorhodospira halophila (strain DSM 244 / SL1) (Ectothiorhodospira halophila (strain DSM 244 / SL1)) protein is D-alanine--D-alanine ligase.